Reading from the N-terminus, the 163-residue chain is NADH-quinone oxidoreductase subunit I (163 aa).

2 4Fe-4S ferredoxin-type domains span residues 53–83 and 94–123; these read LRRY…IEAG and TLYE…ETRE. Residues Cys-63, Cys-66, Cys-69, Cys-73, Cys-103, Cys-106, Cys-109, and Cys-113 each coordinate [4Fe-4S] cluster.

Belongs to the complex I 23 kDa subunit family. In terms of assembly, NDH-1 is composed of 14 different subunits. Subunits NuoA, H, J, K, L, M, N constitute the membrane sector of the complex. It depends on [4Fe-4S] cluster as a cofactor.

The protein resides in the cell inner membrane. The catalysed reaction is a quinone + NADH + 5 H(+)(in) = a quinol + NAD(+) + 4 H(+)(out). NDH-1 shuttles electrons from NADH, via FMN and iron-sulfur (Fe-S) centers, to quinones in the respiratory chain. The immediate electron acceptor for the enzyme in this species is believed to be ubiquinone. Couples the redox reaction to proton translocation (for every two electrons transferred, four hydrogen ions are translocated across the cytoplasmic membrane), and thus conserves the redox energy in a proton gradient. The protein is NADH-quinone oxidoreductase subunit I of Alkalilimnicola ehrlichii (strain ATCC BAA-1101 / DSM 17681 / MLHE-1).